The primary structure comprises 1220 residues: DNA polymerase catalytic subunit (1220 aa).

It belongs to the DNA polymerase type-B family. In terms of assembly, forms a complex with the ssDNA-binding protein, the DNA polymerase processivity factor, and the alkaline exonuclease. Interacts with the helicase-primase complex composed of the primase, the helicase and the primase-associated factor; this interaction may coordinate leading and lagging strand DNA synthesis at the replication fork.

It is found in the host nucleus. It catalyses the reaction DNA(n) + a 2'-deoxyribonucleoside 5'-triphosphate = DNA(n+1) + diphosphate. The enzyme catalyses Endonucleolytic cleavage to 5'-phosphomonoester.. Functionally, replicates viral genomic DNA. The replication complex is composed of six viral proteins: the DNA polymerase, processivity factor, primase, primase-associated factor, helicase, and ssDNA-binding protein. Additionally, the polymerase contains an intrinsic ribonuclease H (RNase H) activity that specifically degrades RNA/DNA heteroduplexes or duplex DNA substrates in the 5' to 3' direction. Therefore, it can catalyze the excision of the RNA primers that initiate the synthesis of Okazaki fragments at a replication fork during viral DNA replication. This Gallid herpesvirus 2 (strain Chicken/Md5/ATCC VR-987) (GaHV-2) protein is DNA polymerase catalytic subunit (MDV043).